A 549-amino-acid polypeptide reads, in one-letter code: Hydroxylamine reductase (549 aa).

[4Fe-4S] cluster contacts are provided by Cys-5, Cys-8, Cys-17, and Cys-23. Residues His-250, Glu-274, Cys-318, Cys-404, Cys-432, Cys-457, Glu-491, and Lys-493 each coordinate hybrid [4Fe-2O-2S] cluster. Cys-404 bears the Cysteine persulfide mark.

It belongs to the HCP family. It depends on [4Fe-4S] cluster as a cofactor. Requires hybrid [4Fe-2O-2S] cluster as cofactor.

The protein localises to the cytoplasm. It carries out the reaction A + NH4(+) + H2O = hydroxylamine + AH2 + H(+). Functionally, catalyzes the reduction of hydroxylamine to form NH(3) and H(2)O. The sequence is that of Hydroxylamine reductase from Geobacter metallireducens (strain ATCC 53774 / DSM 7210 / GS-15).